The sequence spans 161 residues: MRYLELGCISKTNKLFQKLQDLNPLLNIEIEAYSCKSSRRQRGRFVEKPLGYLLSALELRFPDYDFCGESWGSFRRKTLAEVLNEMTYSISTTHKNSDDVKEFVGFLEVILHRSVSLGGCEIFSYENRMGPFEDCLWYFSFLFFNKKQRRVVMLNAFMSRS.

This is an uncharacterized protein from Encephalitozoon cuniculi (strain GB-M1) (Microsporidian parasite).